The sequence spans 159 residues: Ribonuclease H (159 aa).

Residues 1 to 145 (MTHIRAIYTD…CDLIARRLSR (145 aa)) enclose the RNase H type-1 domain. 4 residues coordinate Mg(2+): Asp-10, Glu-49, Asp-74, and Asp-137.

This sequence belongs to the RNase H family. As to quaternary structure, monomer. Mg(2+) serves as cofactor.

The protein resides in the cytoplasm. The catalysed reaction is Endonucleolytic cleavage to 5'-phosphomonoester.. Functionally, endonuclease that specifically degrades the RNA of RNA-DNA hybrids. This Thermosynechococcus vestitus (strain NIES-2133 / IAM M-273 / BP-1) protein is Ribonuclease H.